Consider the following 221-residue polypeptide: uncharacterized protein (221 aa).

This is an uncharacterized protein from Treponema pallidum (strain Nichols).